Reading from the N-terminus, the 391-residue chain is U-box domain-containing protein 57 (391 aa).

In terms of domain architecture, MIF4G spans 1–178 (MVKNSYVLFA…DLTERLLQVE (178 aa)). The U-box domain occupies 322–391 (QPPPSFICPI…LRSAIEELGR (70 aa)).

It catalyses the reaction S-ubiquitinyl-[E2 ubiquitin-conjugating enzyme]-L-cysteine + [acceptor protein]-L-lysine = [E2 ubiquitin-conjugating enzyme]-L-cysteine + N(6)-ubiquitinyl-[acceptor protein]-L-lysine.. It participates in protein modification; protein ubiquitination. Its function is as follows. Functions as an E3 ubiquitin ligase. The sequence is that of U-box domain-containing protein 57 (PUB57) from Arabidopsis thaliana (Mouse-ear cress).